The following is a 258-amino-acid chain: MKGFYMYYLGIILASVIGYFLGSISWSIIIVKKVGNIDIRTVGSGNPGATNTVRTLGKKWGLVVAFLDALKVVFTAIVAILLSMIPNDLFSQTSYFIPCIFALIGHCYPIYYKFKGGKAVSCFLGLLFVVNVLYLIIFLIIWFISVAISRKVSVASMFSALIILLIMWIPYLSGVSYFIWEWNGLEKFRVAWKNYILFSLLNSFHYWFSNTWASGILEGNIIILIGGLILAWRHSQNIKRIKNKTEPDTFPKKVKPVR.

The next 6 membrane-spanning stretches (helical) occupy residues 11–31 (IILA…IIIV), 62–82 (LVVA…AILL), 94–114 (SYFI…YYKF), 124–144 (LGLL…IWFI), 160–180 (ALII…YFIW), and 212–232 (WASG…ILAW).

The protein belongs to the PlsY family. As to quaternary structure, probably interacts with PlsX.

It is found in the cell membrane. The enzyme catalyses an acyl phosphate + sn-glycerol 3-phosphate = a 1-acyl-sn-glycero-3-phosphate + phosphate. It functions in the pathway lipid metabolism; phospholipid metabolism. Catalyzes the transfer of an acyl group from acyl-phosphate (acyl-PO(4)) to glycerol-3-phosphate (G3P) to form lysophosphatidic acid (LPA). This enzyme utilizes acyl-phosphate as fatty acyl donor, but not acyl-CoA or acyl-ACP. This is Glycerol-3-phosphate acyltransferase from Mycoplasma mycoides subsp. mycoides SC (strain CCUG 32753 / NCTC 10114 / PG1).